A 443-amino-acid polypeptide reads, in one-letter code: Diels-Alderase poxQ (443 aa).

A signal peptide spans 1–23 (MARIPLEFLSITLPVLLLAYCLA). N-linked (GlcNAc...) asparagine glycans are attached at residues Asn78, Asn97, and Asn145.

This sequence belongs to the Diels-Alderase family.

It participates in secondary metabolite biosynthesis. Functionally, diels-Alderase; part of the gene cluster that mediates the biosynthesis of oxaleimides, cytotoxic compounds containing an unusual disubstituted succinimide moiety. The first step of the pathway is provided by the HR-PKS poxF that serves in a new mode of collaborative biosynthesis with the PKS-NRPS poxE, by providing the olefin containing amino acid substrate via the synthesis of an ACP-bound dec-4-enoate. The cytochrome P450 monooxygenase poxM-catalyzed oxidation at the alpha-position creates the enzyme-bound 2-hydroxydec-4-enoyl-ACP thioester, which may be prone to spontaneous hydrolysis to yield 2-hydroxydec-4-enoic acid due to increased electrophilicity of the carbonyl. 2-hydroxydec-4-enoic acid can then be further oxidized by poxM to yield the alpha-ketoacid 2-oxodec-4-enoicacid, which is reductively aminated by the aminotransferase poxL to yield (S,E)-2-aminodec-4-enoic acid. The Hybrid PKS-NRPS synthetase poxE then performs condensation between the octaketide product of its PKS modules and the amino group of (S,E)-2-aminodec-4-enoic acid which is activated and incorporated by the adenylation domain. The resulting aminoacyl product can be cyclized by the Diels-Alderase PoxQ and reductively released by the reductive (R) domain of poxE to yield an aldehyde intermediate. The released aldehyde is then substrate for a Knoevenagel condensation by the hydrolyase poxO followed by an oxidation at the 5-position of the pyrrolidone ring. The presence of the olefin from the amino acid building block allows for migration of the substituted allyl group to occur. This allylic transposition reaction takes place in a conjugate addition, semipinacol-like fashion to yield a succinimide intermediate. Iterative two-electron oxidations of the C7 methyl of the succinimide intermediate to the carboxylic acid can be catalyzed by one of two remaining cytochrome P450 monooxygenasess poxC or poxD to yield oxaleimide A. Subsequent oxidation yields the maleimide scaffold oxaleimide I. Both oxaleimide A and oxaleimide I can undergo oxidative modifications in the decalin ring to yield the series of products oxaleimides B to H. The protein is Diels-Alderase poxQ of Penicillium oxalicum.